We begin with the raw amino-acid sequence, 430 residues long: 5-methylthioadenosine/S-adenosylhomocysteine deaminase (430 aa).

Positions 63 and 65 each coordinate Zn(2+). Positions 92, 144, and 182 each coordinate substrate. Histidine 209 is a binding site for Zn(2+). Positions 212 and 297 each coordinate substrate. Position 297 (aspartate 297) interacts with Zn(2+).

It belongs to the metallo-dependent hydrolases superfamily. MTA/SAH deaminase family. Requires Zn(2+) as cofactor.

The catalysed reaction is S-adenosyl-L-homocysteine + H2O + H(+) = S-inosyl-L-homocysteine + NH4(+). It carries out the reaction S-methyl-5'-thioadenosine + H2O + H(+) = S-methyl-5'-thioinosine + NH4(+). Its function is as follows. Catalyzes the deamination of 5-methylthioadenosine and S-adenosyl-L-homocysteine into 5-methylthioinosine and S-inosyl-L-homocysteine, respectively. Is also able to deaminate adenosine. The polypeptide is 5-methylthioadenosine/S-adenosylhomocysteine deaminase (Desulforudis audaxviator (strain MP104C)).